A 178-amino-acid polypeptide reads, in one-letter code: Cytochrome c-type biogenesis protein CcmE (178 aa).

Over 1-8 the chain is Cytoplasmic; it reads MNPRRKKR. The chain crosses the membrane as a helical; Signal-anchor for type II membrane protein span at residues 9-29; the sequence is LAIVGSILIGIGVVSGLVLYA. The Periplasmic segment spans residues 30–178; the sequence is LSQNIDLFFT…QLESKKTNSY (149 aa). Positions 143 and 147 each coordinate heme. Residues 154-178 are disordered; that stretch reads EAAGQKHDKATYSDKQLESKKTNSY. Basic and acidic residues predominate over residues 157-178; it reads GQKHDKATYSDKQLESKKTNSY.

The protein belongs to the CcmE/CycJ family.

The protein localises to the cell inner membrane. Heme chaperone required for the biogenesis of c-type cytochromes. Transiently binds heme delivered by CcmC and transfers the heme to apo-cytochromes in a process facilitated by CcmF and CcmH. This Colwellia psychrerythraea (strain 34H / ATCC BAA-681) (Vibrio psychroerythus) protein is Cytochrome c-type biogenesis protein CcmE.